Here is a 1097-residue protein sequence, read N- to C-terminus: Transmembrane protein 132D (1097 aa).

Positions 1–30 (MCPSEMGTLWYLWSPVLISLAALFSKVTEG) are cleaved as a signal peptide. Residues 31–913 (RGILESIQRF…PDQAAKGLSD (883 aa)) are Extracellular-facing. The segment covering 233–245 (DERGDCAKEDSRK) has biased composition (basic and acidic residues). 2 disordered regions span residues 233–263 (DERG…SPPL) and 885–906 (SFPD…DPDQ). The chain crosses the membrane as a helical span at residues 914–934 (LEIGMYALLGVFCLAILVFLI). Over 935-1097 (NCVTFALKYR…SCMERLHEHV (163 aa)) the chain is Cytoplasmic. The tract at residues 1021–1042 (MLTDDKEQKSEPPTSPTSKRKR) is disordered.

Belongs to the TMEM132 family. In terms of tissue distribution, expressed in mature oligodendrocytes in the brain.

It localises to the membrane. In terms of biological role, regulates neuronal morphology via inhibition of the WAVE regulatory complex (WCR), a complex that controls F-actin cytoskeletal dynamics. The polypeptide is Transmembrane protein 132D (Tmem132d) (Rattus norvegicus (Rat)).